Consider the following 289-residue polypeptide: Serine/threonine-protein phosphatase Pgam5, mitochondrial (289 aa).

The chain crosses the membrane as a helical span at residues 7-23; that stretch reads FACGTGAGLLTFYLTKL.

This sequence belongs to the phosphoglycerate mutase family. BPG-dependent PGAM subfamily. Interacts with Pk92B/ASK1.

It localises to the mitochondrion outer membrane. It catalyses the reaction O-phospho-L-seryl-[protein] + H2O = L-seryl-[protein] + phosphate. It carries out the reaction O-phospho-L-threonyl-[protein] + H2O = L-threonyl-[protein] + phosphate. In terms of biological role, displays phosphatase activity for serine/threonine residues, and dephosphorylates and activates Pk92B kinase. Has apparently no phosphoglycerate mutase activity. The chain is Serine/threonine-protein phosphatase Pgam5, mitochondrial from Drosophila persimilis (Fruit fly).